A 454-amino-acid chain; its full sequence is N-myc 2 proto-oncogene protein (454 aa).

3 disordered regions span residues 133 to 166 (EKMQ…HSGT), 231 to 270 (AAPP…EEEE), and 326 to 374 (SPYV…VRRR). Residues 256–270 (ALSDEVDEEEDEEEE) show a composition bias toward acidic residues. The span at 363–374 (RKSDSEDSVRRR) shows a compositional bias: basic and acidic residues. Residues 371 to 423 (VRRRNHNILERQRRNDLRSSFTTLRDHVPELVKNEKAAKVVILKKACEYVHYL) form the bHLH domain. Residues 423 to 444 (LQAKEHQLLMEKEKLQARQQQL) are leucine-zipper.

In terms of assembly, efficient DNA binding requires dimerization with another bHLH protein.

It localises to the nucleus. The polypeptide is N-myc 2 proto-oncogene protein (N-MYC2) (Otospermophilus beecheyi (California ground squirrel)).